The primary structure comprises 83 residues: uncharacterized protein (83 aa).

This is an uncharacterized protein from Methanocaldococcus jannaschii (strain ATCC 43067 / DSM 2661 / JAL-1 / JCM 10045 / NBRC 100440) (Methanococcus jannaschii).